The chain runs to 507 residues: Myocyte-specific enhancer factor 2A (507 aa).

One can recognise an MADS-box domain in the interval 3-57; the sequence is RKKIQITRIMDERNRQVTFTKRKFGLMKKAYELSVLCDCEIALIIFNSSNKLFQY. Phosphoserine is present on K30. The segment at residues 58-86 is a DNA-binding region (mef2-type); sequence ASTDMDKVLLKYTEYNEPHESRTNSDIVE. A Phosphoserine; by CK2 modification is found at S59. The residue at position 98 (S98) is a Phosphoserine. A compositionally biased stretch (low complexity) spans 173–183; the sequence is TLTDSSMLSPP. The interval 173–229 is disordered; it reads TLTDSSMLSPPQTTLHRNVSPGAPQRPPSTGNAGGMLSTTDLTVPNGAGSSPVGNGF. Positions 209–229 are enriched in polar residues; that stretch reads LSTTDLTVPNGAGSSPVGNGF. At S235 the chain carries Phosphoserine. The interval 243-270 is disordered; the sequence is GANSLGKVMPTKSPPPPGGGNLGMNSRK. The residue at position 249 (K249) is an N6-acetyllysine. S255 bears the Phosphoserine; by MAPK14 mark. The segment at 266–283 is required for interaction with MAPKs; the sequence is MNSRKPDLRVVIPPSSKG. Positions 289–296 are beta domain; sequence SEEEELEL. 2 positions are modified to phosphothreonine; by MAPK7 and MAPK14: T312 and T319. Phosphothreonine; by NLK is present on T312. Position 355 is a phosphoserine; by MAPK7 (S355). Positions 397 to 507 are disordered; it reads NQNISIKSEP…KRMRMDAWVT (111 aa). Residue K403 is modified to N6-acetyllysine; alternate. Residue K403 forms a Glycyl lysine isopeptide (Lys-Gly) (interchain with G-Cter in SUMO); alternate linkage. Residue S408 is modified to Phosphoserine; by CDK5. The residue at position 415 (T415) is a Phosphothreonine. The segment covering 420 to 429 has biased composition (low complexity); that stretch reads QQQQQQQQQQ. Residues 430–445 show a composition bias toward pro residues; the sequence is QPPPPPQPQPQPPQPQ. The residue at position 453 (S453) is a Phosphoserine; by MAPK. Residues 453-466 are compositionally biased toward low complexity; it reads SPVDSLSSSSSSYD. Composition is skewed to basic and acidic residues over residues 467 to 477 and 488 to 507; these read GSDREDPRGDF and NTED…AWVT.

This sequence belongs to the MEF2 family. As to quaternary structure, binds DNA as a homo- or heterodimer. Dimerizes with MEF2D. Interacts with HDAC7. Interacts with PIAS1; the interaction enhances sumoylation. Interacts with HDAC4, HDAC9 and SLC2A4RG. Interacts (via the N-terminal) with MAPK7; the interaction results in the phosphorylation and transcriptional activity of MEF2A. Constitutive phosphorylation on Ser-408 promotes Lys-403 sumoylation thus preventing acetylation at this site. Dephosphorylation on Ser-408 by PPP3CA upon neuron depolarization promotes a switch from sumoylation to acetylation on residue Lys-403 leading to inhibition of dendrite claw differentiation. Phosphorylation on Thr-312 and Thr-319 are the main sites involved in p38 MAPK signaling and activate transcription. Phosphorylated on these sites by MAPK14/p38alpha and MAPK11/p38beta, but not by MAPK13/p38delta nor by MAPK12/p38gamma. Phosphorylation on Ser-408 by CDK5 induced by neurotoxicity inhibits MEF2A transcriptional activation leading to apoptosis of cortical neurons. Phosphorylation on Thr-312, Thr-319 and Ser-355 can be induced by EGF. In terms of processing, sumoylation on Lys-403 is enhanced by PIAS1 and represses transcriptional activity. Phosphorylation on Ser-408 is required for sumoylation. Has no effect on nuclear location nor on DNA binding. Sumoylated with SUMO1 and, to a lesser extent with SUMO2 and SUMO3. PIASx facilitates sumoylation in postsynaptic dendrites in the cerebellar cortex and promotes their morphogenesis. Post-translationally, acetylation on Lys-403 activates transcriptional activity. Acetylated by p300 on several sites in diffentiating myocytes. Acetylation on Lys-4 increases DNA binding and transactivation. Hyperacetylation by p300 leads to enhanced cardiac myocyte growth and heart failure. Proteolytically cleaved in cerebellar granule neurons on several sites by caspase 3 and caspase 7 following neurotoxicity. Preferentially cleaves the CDK5-mediated hyperphosphorylated form which leads to neuron apoptosis and transcriptional inactivation. Isoform MEF2 and isoform MEFA are expressed only in skeletal and cardiac muscle and in the brain. Isoform RSRFC4 and isoform RSRFC9 are expressed in all tissues examined.

Its subcellular location is the nucleus. Its function is as follows. Transcriptional activator which binds specifically to the MEF2 element, 5'-YTA[AT](4)TAR-3', found in numerous muscle-specific genes. Also involved in the activation of numerous growth factor- and stress-induced genes. Mediates cellular functions not only in skeletal and cardiac muscle development, but also in neuronal differentiation and survival. Plays diverse roles in the control of cell growth, survival and apoptosis via p38 MAPK signaling in muscle-specific and/or growth factor-related transcription. In cerebellar granule neurons, phosphorylated and sumoylated MEF2A represses transcription of NUR77 promoting synaptic differentiation. Associates with chromatin to the ZNF16 promoter. In Homo sapiens (Human), this protein is Myocyte-specific enhancer factor 2A (MEF2A).